Here is a 77-residue protein sequence, read N- to C-terminus: NADH dehydrogenase [ubiquinone] 1 alpha subcomplex subunit 3 (77 aa).

Residues 23 to 45 traverse the membrane as a helical segment; it reads IVGGSALALAGIVMATIGVANYY.

Belongs to the complex I NDUFA3 subunit family. As to quaternary structure, complex I is composed of 43 different subunits.

It localises to the mitochondrion inner membrane. Its subcellular location is the cytoplasm. The protein localises to the myofibril. The protein resides in the sarcomere. It is found in the z line. Accessory subunit of the mitochondrial membrane respiratory chain NADH dehydrogenase (Complex I), that is believed not to be involved in catalysis. Complex I functions in the transfer of electrons from NADH to the respiratory chain. The immediate electron acceptor for the enzyme is believed to be ubiquinone. Required for the maintenance of muscle integrity and for cell proliferation in the wing imaginal disc epithelium, possibly by interacting with the chaperone-assisted selective autophagy (CASA) pathway. This chain is NADH dehydrogenase [ubiquinone] 1 alpha subcomplex subunit 3, found in Drosophila melanogaster (Fruit fly).